The sequence spans 1267 residues: MTHTIRVLIKYQNSMIDHFIIKGVKLSTQIDMFCQIFKIQEDPIKYSLLVEDLGVYLTDDAIFHENSTYININNKVLELQLGTSYQVSSVLKTMSSCKDLKKSLVLLKSHLTKNFCAEFIKKGGLEHLQAIIKSESASANTLSVAFGILEILSVYPDFSWDYISQPVIDKVVSNFGYINVNPSLKLGIKLATDRKGYTMLQNSIDKTFDTTTGDNCVYSKIVNGNLSSTDINTQTSTLNLINNMVSFSQSPIEFLKNLESYNISSTLKSQLSATDTAFRKQIYLFQCHKIQGLIMDSKTPYNKDEPSHQRLLETLWSTLFPNQVFQRSHENWQIIGFQNKDPSSDFRGMGLAGLKHLIYLAQNHKDMFMNPLINRQPEANYYPYATSGIQVTSFLVECVKPINISANHSDVIGQIYPILFESENALNEIYCVLMEIFGIVWKDWNATYMIFQKVFQFVSGLASEVLPKCKCVVDFKSLIIEKLENKKKEKKSEKRGSVSTRHSKQFGSNGNINSTTTTTTTTTTTTTPISTTGSGSSNSLNGNTSNNNNNNNISMSYSSNNGSTLSGLGNNHSSNNNNNNNNNNNNNNNNHILNNNHLYVNNTNSNSSGNNMISCSPSGSSISGSGSISIHNSQSMNSKTFIEDIDIDACTVSPDGNSPLHSAIMNSMTLDCITNGININLFLNTTNNQGLTPLNLACSISPYLIIDFFLQQDTDPFIPAKNGEYPFHNFCSRKWTFNEFTRGCSLFLAKSNHHQYHDIVNQTNHVTLETPLSTAIQSGNEDSVGHLLTLCPNINNYFNSSGQNALHIAISKRNLHIITCLIQNGADPSIPNEITKETCEDICASDPEIMIILNPTKLSRSTSSTSSSTSRIHDESNNNGSIKKNPIPLPKRPQITNNNSIQYSNSTSSNSLINNNNFNNLLSTSINNSYNNNNNNNNNNNNNNNNNNNNNNNNNNNNPNNNNNNNNNNNPNNNSNNNNNNNNNNNNNNNNSTLNVNNNNNSNNNHQYVNSPYNSNKSSISSPNHNNTPSTSPGITSPIFRSATPLKQTMSVGLMHSPTQESPQVISTPTSPPYLSNNNGAERVYGRSGSGFFNNINGMFNQENLTKNSGNNNNNNSSSSGGSSSSNSNGINNNNNNNINNNNNNNNNNNNNNNNNGSIGNSGNYNHMNNINIGSHHSNHHSNHNGPINNGNYPNYRGNNITTSPVGVTVTPPKDQKKADSVVNVRRLLNESLCLVDLICSGPEKQKENVKKLNEALKSCLKNVKNF.

An ELMO domain is found at 307–466 (SHQRLLETLW…FVSGLASEVL (160 aa)). Residues 486–496 (KKKEKKSEKRG) are compositionally biased toward basic and acidic residues. The tract at residues 486–598 (KKKEKKSEKR…NNHILNNNHL (113 aa)) is disordered. Positions 507–598 (GSNGNINSTT…NNHILNNNHL (92 aa)) are enriched in low complexity. ANK repeat units lie at residues 655-685 (DGNS…FLNT), 689-718 (QGLT…DPFI), 767-796 (TLET…NINN), and 801-830 (SGQN…DPSI). Disordered stretches follow at residues 854-908 (NPTK…NSTS), 924-1040 (TSIN…SPIF), 1057-1082 (SPTQ…NGAE), and 1103-1215 (ENLT…PPKD). Low complexity-rich tracts occupy residues 859-870 (SRSTSSTSSSTS), 895-908 (ITNN…NSTS), and 924-1033 (TSIN…STSP). Residues 1057-1080 (SPTQESPQVISTPTSPPYLSNNNG) show a composition bias toward polar residues. Low complexity-rich tracts occupy residues 1108 to 1176 (NSGN…IGSH) and 1184 to 1213 (HNGP…VTPP).

This is Ankyrin repeat and ELMO domain-containing protein D (elmoD) from Dictyostelium discoideum (Social amoeba).